Reading from the N-terminus, the 144-residue chain is Large ribosomal subunit protein uL15 (144 aa).

The tract at residues 20-49 (GRGIGSGLGKTGGRGHKGQKSRSGGFHKVG) is disordered. Gly residues predominate over residues 21 to 31 (RGIGSGLGKTG).

This sequence belongs to the universal ribosomal protein uL15 family. As to quaternary structure, part of the 50S ribosomal subunit.

Binds to the 23S rRNA. The chain is Large ribosomal subunit protein uL15 from Neisseria meningitidis serogroup C (strain 053442).